Reading from the N-terminus, the 475-residue chain is Lipid II flippase MurJ (475 aa).

The Cytoplasmic segment spans residues 1–2 (MS). A helical transmembrane segment spans residues 3–23 (ILFSSILFSIATFFSRILGLF). Topologically, residues 24-35 (RDVLFAKYFGVS) are periplasmic. A helical transmembrane segment spans residues 36-56 (YELDAYFIAIMFPFFLRKVFG). The Cytoplasmic segment spans residues 57–78 (EGAMSSAFVPLYSEKSGEEKDK). Residues 79-99 (FLSSVINGFSLIILALVILSY) form a helical membrane-spanning segment. The Periplasmic portion of the chain corresponds to 100 to 123 (FFPELIINLFGAGSSHETKILAKK). A helical transmembrane segment spans residues 124-144 (LLLITSPSIYFIFLWAISYSI). The Cytoplasmic segment spans residues 145–150 (LNTNNK). The helical transmembrane segment at 151 to 171 (FFWPALTPSISNITIIIGTFL) threads the bilayer. Residues 172–175 (STKY) are Periplasmic-facing. The chain crosses the membrane as a helical span at residues 176 to 196 (GIISPTIGFLIGSILMFFSII). The Cytoplasmic portion of the chain corresponds to 197 to 213 (KSIIKHKYYFTIKHFPH). Residues 214–238 (FLKLFFPTFMTMVVSQINTVVDMNV) form a helical membrane-spanning segment. At 239 to 249 (VSFYDKGSISY) the chain is on the periplasmic side. A helical membrane pass occupies residues 250 to 271 (LQYASRFYLLPYGLFAVSVSTV). Residues 272–287 (VLSKISNDRKNFNYHL) lie on the Cytoplasmic side of the membrane. A helical transmembrane segment spans residues 288–308 (NDALKTTLFFTIPSMVGLIFL). Residues 309-332 (STPIIRFFYEHGAFTSKDTLITSK) are Periplasmic-facing. The chain crosses the membrane as a helical span at residues 333-353 (ILIAYTLGLPFYGIYSTISRS). Topologically, residues 354–362 (YHAIKNTKT) are cytoplasmic. The chain crosses the membrane as a helical span at residues 363–383 (PFIAATIVSLSNIILDIIFGL). Over 384 to 386 (KYG) the chain is Periplasmic. Residues 387–407 (PIGVALATSIAGIIGVLYLLF) traverse the membrane as a helical segment. Topologically, residues 408-416 (SVKTFPIKD) are cytoplasmic. A helical transmembrane segment spans residues 417–437 (FLKISLNSLIMLFVIYLTDFT). The Periplasmic portion of the chain corresponds to 438 to 440 (DNE). Residues 441–461 (FWFLIQILIGILVYLIFSSIF) traverse the membrane as a helical segment. The Cytoplasmic segment spans residues 462-475 (YRDLIRRFLYARKK).

It belongs to the MurJ/MviN family.

The protein resides in the cell inner membrane. Its pathway is cell wall biogenesis; peptidoglycan biosynthesis. Involved in peptidoglycan biosynthesis. Transports lipid-linked peptidoglycan precursors from the inner to the outer leaflet of the cytoplasmic membrane. In Thermosipho africanus (strain TCF52B), this protein is Lipid II flippase MurJ.